Reading from the N-terminus, the 179-residue chain is Prion-like protein doppel (179 aa).

The N-terminal stretch at 1-25 is a signal peptide; it reads MKNRLGTWWVAILCMLLASHLSTVK. Residues 27 to 50 form a flexible tail region; sequence RGIKHRFKWNRKVLPSSGGQITEA. The globular stretch occupies residues 51 to 155; sequence RVAENRPGAF…KHCDFWLERG (105 aa). 2 disulfide bridges follow: C95/C148 and C109/C143. 2 N-linked (GlcNAc...) asparagine glycosylation sites follow: N99 and N111. A cu(2+) binding region spans residues 125 to 142; that stretch reads KQDSKLHQRVLWRLIKEI. A lipid anchor (GPI-anchor amidated glycine) is attached at G155. A propeptide spans 156–179 (removed in mature form); sequence AALRVAVDQPAMVCLLGFVWFIVK.

Belongs to the prion family. Post-translationally, N-glycosylated. N-glycosylated at two distinct sites. O-glycosylated. In terms of tissue distribution, detected in testis. Detected within seminiferous tubules, on round and elongated spermatids (at protein level). Not detected in brain (at protein level). Detected in testis, and at low levels in heart. Expression in brain is very low and barely detectable.

It is found in the cell membrane. Functionally, required for normal acrosome reaction and for normal male fertility. Can bind Cu(2+). In Mus musculus (Mouse), this protein is Prion-like protein doppel (Prnd).